Here is a 466-residue protein sequence, read N- to C-terminus: Bifunctional protein GlmU (466 aa).

Residues 1–236 (MEVMPQPLTI…PAEALGINDR (236 aa)) form a pyrophosphorylase region. Residues 13–16 (LAAG), lysine 27, glutamine 79, 84–85 (GT), 107–109 (YGD), glycine 146, glutamate 161, asparagine 176, and asparagine 234 contribute to the UDP-N-acetyl-alpha-D-glucosamine site. Aspartate 109 contacts Mg(2+). A Mg(2+)-binding site is contributed by asparagine 234. The segment at 237-257 (AQLAEVDRIFRDRKRRAVMAA) is linker. The segment at 258-466 (GVTLIQPETI…AKKRRKLAKT (209 aa)) is N-acetyltransferase. Positions 340 and 358 each coordinate UDP-N-acetyl-alpha-D-glucosamine. The active-site Proton acceptor is the histidine 370. Positions 373 and 384 each coordinate UDP-N-acetyl-alpha-D-glucosamine. Residues alanine 387, 393-394 (NY), serine 412, alanine 430, and arginine 447 each bind acetyl-CoA.

It in the N-terminal section; belongs to the N-acetylglucosamine-1-phosphate uridyltransferase family. The protein in the C-terminal section; belongs to the transferase hexapeptide repeat family. Homotrimer. Mg(2+) serves as cofactor.

Its subcellular location is the cytoplasm. The catalysed reaction is alpha-D-glucosamine 1-phosphate + acetyl-CoA = N-acetyl-alpha-D-glucosamine 1-phosphate + CoA + H(+). It carries out the reaction N-acetyl-alpha-D-glucosamine 1-phosphate + UTP + H(+) = UDP-N-acetyl-alpha-D-glucosamine + diphosphate. Its pathway is nucleotide-sugar biosynthesis; UDP-N-acetyl-alpha-D-glucosamine biosynthesis; N-acetyl-alpha-D-glucosamine 1-phosphate from alpha-D-glucosamine 6-phosphate (route II): step 2/2. It participates in nucleotide-sugar biosynthesis; UDP-N-acetyl-alpha-D-glucosamine biosynthesis; UDP-N-acetyl-alpha-D-glucosamine from N-acetyl-alpha-D-glucosamine 1-phosphate: step 1/1. It functions in the pathway bacterial outer membrane biogenesis; LPS lipid A biosynthesis. Catalyzes the last two sequential reactions in the de novo biosynthetic pathway for UDP-N-acetylglucosamine (UDP-GlcNAc). The C-terminal domain catalyzes the transfer of acetyl group from acetyl coenzyme A to glucosamine-1-phosphate (GlcN-1-P) to produce N-acetylglucosamine-1-phosphate (GlcNAc-1-P), which is converted into UDP-GlcNAc by the transfer of uridine 5-monophosphate (from uridine 5-triphosphate), a reaction catalyzed by the N-terminal domain. This chain is Bifunctional protein GlmU, found in Solibacter usitatus (strain Ellin6076).